Reading from the N-terminus, the 245-residue chain is tRNA pseudouridine synthase A (245 aa).

Residue Asp52 is the Nucleophile of the active site. Tyr111 serves as a coordination point for substrate.

Belongs to the tRNA pseudouridine synthase TruA family. As to quaternary structure, homodimer.

The catalysed reaction is uridine(38/39/40) in tRNA = pseudouridine(38/39/40) in tRNA. Its function is as follows. Formation of pseudouridine at positions 38, 39 and 40 in the anticodon stem and loop of transfer RNAs. This Wolbachia pipientis wMel protein is tRNA pseudouridine synthase A.